A 782-amino-acid chain; its full sequence is Phosphoribosylformylglycinamidine synthase subunit PurL (782 aa).

His-48 is an active-site residue. Tyr-51 and Lys-90 together coordinate ATP. Residue Glu-92 participates in Mg(2+) binding. Residues 93-96 and Arg-115 contribute to the substrate site; that span reads SHNH. Residue His-94 is the Proton acceptor of the active site. Residue Asp-116 coordinates Mg(2+). Gln-239 is a substrate binding site. Asp-267 is a binding site for Mg(2+). Residue 311–313 coordinates substrate; that stretch reads ESQ. ATP is bound by residues Asp-525 and Gly-562. Residue Asn-563 participates in Mg(2+) binding. Ser-565 serves as a coordination point for substrate.

This sequence belongs to the FGAMS family. In terms of assembly, monomer. Part of the FGAM synthase complex composed of 1 PurL, 1 PurQ and 2 PurS subunits.

It is found in the cytoplasm. It carries out the reaction N(2)-formyl-N(1)-(5-phospho-beta-D-ribosyl)glycinamide + L-glutamine + ATP + H2O = 2-formamido-N(1)-(5-O-phospho-beta-D-ribosyl)acetamidine + L-glutamate + ADP + phosphate + H(+). It functions in the pathway purine metabolism; IMP biosynthesis via de novo pathway; 5-amino-1-(5-phospho-D-ribosyl)imidazole from N(2)-formyl-N(1)-(5-phospho-D-ribosyl)glycinamide: step 1/2. In terms of biological role, part of the phosphoribosylformylglycinamidine synthase complex involved in the purines biosynthetic pathway. Catalyzes the ATP-dependent conversion of formylglycinamide ribonucleotide (FGAR) and glutamine to yield formylglycinamidine ribonucleotide (FGAM) and glutamate. The FGAM synthase complex is composed of three subunits. PurQ produces an ammonia molecule by converting glutamine to glutamate. PurL transfers the ammonia molecule to FGAR to form FGAM in an ATP-dependent manner. PurS interacts with PurQ and PurL and is thought to assist in the transfer of the ammonia molecule from PurQ to PurL. The chain is Phosphoribosylformylglycinamidine synthase subunit PurL from Nostoc sp. (strain PCC 7120 / SAG 25.82 / UTEX 2576).